A 307-amino-acid chain; its full sequence is Ribosomal RNA small subunit methyltransferase H (307 aa).

S-adenosyl-L-methionine is bound by residues 33-35, Asp51, Phe82, Asp96, and Gln103; that span reads GGY.

The protein belongs to the methyltransferase superfamily. RsmH family.

The protein resides in the cytoplasm. The enzyme catalyses cytidine(1402) in 16S rRNA + S-adenosyl-L-methionine = N(4)-methylcytidine(1402) in 16S rRNA + S-adenosyl-L-homocysteine + H(+). In terms of biological role, specifically methylates the N4 position of cytidine in position 1402 (C1402) of 16S rRNA. This Rickettsia rickettsii (strain Iowa) protein is Ribosomal RNA small subunit methyltransferase H.